The following is a 340-amino-acid chain: Holliday junction branch migration complex subunit RuvB (340 aa).

The tract at residues 4–184 (TDRIVGGQSL…FGIVQRLEFY (181 aa)) is large ATPase domain (RuvB-L). ATP is bound by residues Arg-24, Gly-65, Lys-68, Thr-69, Thr-70, 131–133 (EDF), Arg-174, Tyr-184, and Arg-221. Thr-69 is a binding site for Mg(2+). Positions 185-255 (SIEELAQIVT…IADLALNLLE (71 aa)) are small ATPAse domain (RuvB-S). Residues 258-340 (PLGLDKMDRR…TMPERNLEDE (83 aa)) form a head domain (RuvB-H) region. DNA-binding residues include Arg-294, Arg-313, and Arg-318.

This sequence belongs to the RuvB family. In terms of assembly, homohexamer. Forms an RuvA(8)-RuvB(12)-Holliday junction (HJ) complex. HJ DNA is sandwiched between 2 RuvA tetramers; dsDNA enters through RuvA and exits via RuvB. An RuvB hexamer assembles on each DNA strand where it exits the tetramer. Each RuvB hexamer is contacted by two RuvA subunits (via domain III) on 2 adjacent RuvB subunits; this complex drives branch migration. In the full resolvosome a probable DNA-RuvA(4)-RuvB(12)-RuvC(2) complex forms which resolves the HJ.

Its subcellular location is the cytoplasm. The enzyme catalyses ATP + H2O = ADP + phosphate + H(+). Its function is as follows. The RuvA-RuvB-RuvC complex processes Holliday junction (HJ) DNA during genetic recombination and DNA repair, while the RuvA-RuvB complex plays an important role in the rescue of blocked DNA replication forks via replication fork reversal (RFR). RuvA specifically binds to HJ cruciform DNA, conferring on it an open structure. The RuvB hexamer acts as an ATP-dependent pump, pulling dsDNA into and through the RuvAB complex. RuvB forms 2 homohexamers on either side of HJ DNA bound by 1 or 2 RuvA tetramers; 4 subunits per hexamer contact DNA at a time. Coordinated motions by a converter formed by DNA-disengaged RuvB subunits stimulates ATP hydrolysis and nucleotide exchange. Immobilization of the converter enables RuvB to convert the ATP-contained energy into a lever motion, pulling 2 nucleotides of DNA out of the RuvA tetramer per ATP hydrolyzed, thus driving DNA branch migration. The RuvB motors rotate together with the DNA substrate, which together with the progressing nucleotide cycle form the mechanistic basis for DNA recombination by continuous HJ branch migration. Branch migration allows RuvC to scan DNA until it finds its consensus sequence, where it cleaves and resolves cruciform DNA. In Hydrogenovibrio crunogenus (strain DSM 25203 / XCL-2) (Thiomicrospira crunogena), this protein is Holliday junction branch migration complex subunit RuvB.